The chain runs to 174 residues: NADH-quinone oxidoreductase subunit B 2 (174 aa).

[4Fe-4S] cluster contacts are provided by Cys-53, Cys-54, Cys-118, and Cys-148.

It belongs to the complex I 20 kDa subunit family. NDH-1 is composed of 14 different subunits. Subunits NuoB, C, D, E, F, and G constitute the peripheral sector of the complex. It depends on [4Fe-4S] cluster as a cofactor.

Its subcellular location is the cell inner membrane. The catalysed reaction is a quinone + NADH + 5 H(+)(in) = a quinol + NAD(+) + 4 H(+)(out). NDH-1 shuttles electrons from NADH, via FMN and iron-sulfur (Fe-S) centers, to quinones in the respiratory chain. Couples the redox reaction to proton translocation (for every two electrons transferred, four hydrogen ions are translocated across the cytoplasmic membrane), and thus conserves the redox energy in a proton gradient. This chain is NADH-quinone oxidoreductase subunit B 2, found in Cereibacter sphaeroides (strain ATCC 17025 / ATH 2.4.3) (Rhodobacter sphaeroides).